A 187-amino-acid chain; its full sequence is Elongation factor P (187 aa).

It belongs to the elongation factor P family.

The protein localises to the cytoplasm. Its pathway is protein biosynthesis; polypeptide chain elongation. Involved in peptide bond synthesis. Stimulates efficient translation and peptide-bond synthesis on native or reconstituted 70S ribosomes in vitro. Probably functions indirectly by altering the affinity of the ribosome for aminoacyl-tRNA, thus increasing their reactivity as acceptors for peptidyl transferase. The chain is Elongation factor P from Mycoplasmopsis pulmonis (strain UAB CTIP) (Mycoplasma pulmonis).